Consider the following 266-residue polypeptide: Tryptophan synthase alpha chain (266 aa).

Active-site proton acceptor residues include E49 and D60.

The protein belongs to the TrpA family. Tetramer of two alpha and two beta chains.

It carries out the reaction (1S,2R)-1-C-(indol-3-yl)glycerol 3-phosphate + L-serine = D-glyceraldehyde 3-phosphate + L-tryptophan + H2O. The protein operates within amino-acid biosynthesis; L-tryptophan biosynthesis; L-tryptophan from chorismate: step 5/5. Functionally, the alpha subunit is responsible for the aldol cleavage of indoleglycerol phosphate to indole and glyceraldehyde 3-phosphate. This Thioalkalivibrio sulfidiphilus (strain HL-EbGR7) protein is Tryptophan synthase alpha chain.